A 279-amino-acid polypeptide reads, in one-letter code: Digeranylgeranylglyceryl phosphate synthase (279 aa).

9 helical membrane passes run 16–36 (LIAG…LPPI), 40–60 (LLIF…NDYF), 77–99 (GALS…ILIA), 104–121 (FEAF…YLYA), 124–144 (LKPQ…ITPI), 146–166 (GAIA…AFLV), 192–212 (IVWG…ATII), 220–240 (AGIG…LWAA), and 259–279 (LKIA…TKGV).

The protein belongs to the UbiA prenyltransferase family. DGGGP synthase subfamily. The cofactor is Mg(2+).

The protein resides in the cell membrane. It carries out the reaction sn-3-O-(geranylgeranyl)glycerol 1-phosphate + (2E,6E,10E)-geranylgeranyl diphosphate = 2,3-bis-O-(geranylgeranyl)-sn-glycerol 1-phosphate + diphosphate. The protein operates within membrane lipid metabolism; glycerophospholipid metabolism. Its function is as follows. Prenyltransferase that catalyzes the transfer of the geranylgeranyl moiety of geranylgeranyl diphosphate (GGPP) to the C2 hydroxyl of (S)-3-O-geranylgeranylglyceryl phosphate (GGGP). This reaction is the second ether-bond-formation step in the biosynthesis of archaeal membrane lipids. This Thermococcus sibiricus (strain DSM 12597 / MM 739) protein is Digeranylgeranylglyceryl phosphate synthase.